We begin with the raw amino-acid sequence, 713 residues long: F-box/WD repeat-containing protein 7 (713 aa).

Residues 1–150 (MNQELLSVGS…DEHTHNSNVT (150 aa)) form a disordered region. Ser-26 carries the phosphoserine modification. The span at 46 to 55 (RHQEEEHTAR) shows a compositional bias: basic and acidic residues. Positions 69–84 (QNDSQQGQVEENNNRF) are enriched in polar residues. Positions 87–135 (VDEDSSGNQEEQEEDEEHAGEQEEEEEEEEEEEEEEEMDQESDDFDQSD) are enriched in acidic residues. The stretch at 94–136 (NQEEQEEDEEHAGEQEEEEEEEEEEEEEEEMDQESDDFDQSDD) forms a coiled coil. Over residues 136–145 (DSSREDEHTH) the composition is skewed to basic and acidic residues. Thr-211 bears the Phosphothreonine mark. Phosphoserine is present on Ser-233. Residues 284–330 (RDFISLLPKELALYVLSFLEPKDLLQAAQTCRYWRILAEDNLLWREK) enclose the F-box domain. 7 WD repeats span residues 384 to 424 (GHDD…RTLV), 426 to 462 (HTGGVWSSQMRDNIIISGSTDRTLKVWNAETGECIHT), 465 to 504 (GHTSTVRCMHLHEKRVVSGSRDATLRVWDIETGQCLHVLM), 506 to 542 (HVAAVRCVQYDGRRVVSGAYDFMVKVWDPETETCLHT), 545 to 584 (GHTNRVYSLQFDGIHVVSGSLDTSIRVWDVETGNCIHTLT), 586 to 624 (HQSLTSGMELKDNILVSGNADSTVKIWDIKTGQCLQTLQ), and 628 to 665 (KHQSAVTCLQFNKNFVITSSDDGTVKLWDLKTGEFIRN).

As to quaternary structure, homodimer; homodimerization plays a role in substrate binding and/or ubiquitination and degradation. Component of the SCF(FBXW7) complex consisting of CUL1, RBX1, SKP1 and FBXW7. Interacts (via F-box domain) with SKP1. Interacts (via F-box domain) with pseudophosphatase STYX; the interaction is direct and prevents FBXW7 interaction with SKP1. Interacts with cyclin-E (CCNE1 or CCNE2). Interacts with PSEN1. Forms a trimeric complex with NOTCH1 and SGK1. Interacts with NOTCH1 intracellular domain/NICD and NOTCH4 intracellular domain/NICD. Interacts with NOTCH2 intracellular domain (N2ICD). Interacts with MYC (when phosphorylated). Interacts with USP28, counteracting ubiquitination of MYC. Interacts (when phosphorylated at Thr-211) with PIN1, disrupting FBXW7 dimerization and promoting FBXW7 autoubiquitination and degradation. Interacts with UBE2QL1. Interacts with FAM83D; promotes FBXW7 degradation. Interacts with MYCN; FBXW7 competes with AURKA for binding to unphosphorylated MYCN but not for binding to phosphorylated MYCN. Interacts with JUN. Found in a complex with JUN and PRR7. Interacts with JUN and PRR7; the interaction inhibits ubiquitination-mediated JUN degradation, promoting its phosphorylation and transcriptional activity. Interacts with NFE2L1. Interacts with NR1D1. Interacts with RICTOR; mediates RICTOR ubiquitination and degradation. Post-translationally, phosphorylation at Thr-211 promotes interaction with PIN1, leading to disrupt FBXW7 dimerization and promoting FBXW7 autoubiquitination and degradation. Phosphorylated by ATM at Ser-26 in response to DNA damage, promoting recruitment to DNA damage sites and 'Lys-63'-linked ubiquitination of phosphorylated XRCC4. In terms of processing, ubiquitinated: autoubiquitinates following phosphorylation at Thr-211 and subsequent interaction with PIN1. Ubiquitination leads to its degradation.

It localises to the nucleus. The protein localises to the nucleoplasm. It is found in the chromosome. Its pathway is protein modification; protein ubiquitination. In terms of biological role, substrate recognition component of a SCF (SKP1-CUL1-F-box protein) E3 ubiquitin-protein ligase complex which mediates the ubiquitination and subsequent proteasomal degradation of target proteins. Recognizes and binds phosphorylated sites/phosphodegrons within target proteins and thereafter brings them to the SCF complex for ubiquitination. Identified substrates include cyclin-E (CCNE1 or CCNE2), JUN, MYC, NOTCH1 released notch intracellular domain (NICD), NOTCH2, MCL1, MLST8, RICTOR and probably PSEN1. Acts as a negative regulator of JNK signaling by binding to phosphorylated JUN and promoting its ubiquitination and subsequent degradation. SCF(FBXW7) complex mediates the ubiquitination and subsequent degradation of NFE2L1. Involved in bone homeostasis and negative regulation of osteoclast differentiation. Regulates the amplitude of the cyclic expression of hepatic core clock genes and genes involved in lipid and glucose metabolism via ubiquitination and proteasomal degradation of their transcriptional repressor NR1D1; CDK1-dependent phosphorylation of NR1D1 is necessary for SCF(FBXW7)-mediated ubiquitination. Also able to promote 'Lys-63'-linked ubiquitination in response to DNA damage. The SCF(FBXW7) complex facilitates double-strand break repair following phosphorylation by ATM: phosphorylation promotes localization to sites of double-strand breaks and 'Lys-63'-linked ubiquitination of phosphorylated XRCC4, enhancing DNA non-homologous end joining. The sequence is that of F-box/WD repeat-containing protein 7 from Rattus norvegicus (Rat).